A 364-amino-acid polypeptide reads, in one-letter code: MNERKIIHIDMDAFYASVEQRDHPELRGKPLAVGHAEERGVVAAASYEARRYGVRSAMSSQKAKRLCPQLIFVPGRMEVYKSVSRQVHEIFHEYTDLIEPLSLDEAFLDVTENKQGILLAVDIAKAIKQRIREELSLVASAGVSYNKFLAKIASDFRKPDGLCTIHPDQAIDFIARLPIESFWGVGPVTARKMHLLGIHNGLQLRECSSEMLVRQFGKVGLLYYDFARGVDLRPVEAVRIRKSIGCEHTLEKDIHVRSSVIIELYHVATELVERLQQKEFRGNTLTLKIKFHDFSQITRSMTQAQELTNLERILPLAKQLLKEVEYEQHPIRLIGLSVSNPREEADEHRGVWEQLSFEFSDWGK.

The UmuC domain maps to 6 to 186; sequence IIHIDMDAFY…LPIESFWGVG (181 aa). Positions 10 and 104 each coordinate Mg(2+). Glu-105 is an active-site residue.

It belongs to the DNA polymerase type-Y family. Monomer. It depends on Mg(2+) as a cofactor.

Its subcellular location is the cytoplasm. It carries out the reaction DNA(n) + a 2'-deoxyribonucleoside 5'-triphosphate = DNA(n+1) + diphosphate. In terms of biological role, poorly processive, error-prone DNA polymerase involved in untargeted mutagenesis. Copies undamaged DNA at stalled replication forks, which arise in vivo from mismatched or misaligned primer ends. These misaligned primers can be extended by PolIV. Exhibits no 3'-5' exonuclease (proofreading) activity. May be involved in translesional synthesis, in conjunction with the beta clamp from PolIII. This Bacteroides fragilis (strain YCH46) protein is DNA polymerase IV.